Reading from the N-terminus, the 1047-residue chain is Probable phospholipid-transporting ATPase IIA (1047 aa).

Position 2 is an N-acetylthreonine (Thr-2). At 2 to 69 (TDNIPLQPVR…NQKYNFFTFL (68 aa)) the chain is on the cytoplasmic side. A helical membrane pass occupies residues 70–91 (PGVLFNQFKYFFNLYFLLLACS). Over 92–96 (QFVPE) the chain is Extracellular. Residues 97 to 119 (MRLGALYTYWVPLGFVLAVTVIR) form a helical membrane-spanning segment. The Cytoplasmic segment spans residues 120-303 (EAVEEIRCYV…GLFDLEVNCL (184 aa)). Residues 304–325 (TKILFGALVVVSLVMVALQHFA) form a helical membrane-spanning segment. Residues 326-332 (GRWYLQI) lie on the Extracellular side of the membrane. The chain crosses the membrane as a helical span at residues 333–354 (IRFLLLFSNIIPISLRVNLDMG). Topologically, residues 355 to 841 (KIVYSWVIRR…GRNSYKRSAA (487 aa)) are cytoplasmic. Asp-391 acts as the 4-aspartylphosphate intermediate in catalysis. ATP-binding residues include Asp-391, Lys-392, Thr-393, Glu-502, Phe-544, Lys-549, Lys-568, Arg-597, Thr-677, Gly-678, Asp-679, Arg-759, and Lys-765. Asp-391 is a Mg(2+) binding site. Thr-393 is a binding site for Mg(2+). Residue Asp-785 participates in Mg(2+) binding. ATP contacts are provided by Asn-788 and Asp-789. A Mg(2+)-binding site is contributed by Asp-789. The helical transmembrane segment at 842–862 (LSQFVIHRSLCISTMQAVFSS) threads the bilayer. At 863-874 (VFYFASVPLYQG) the chain is on the extracellular side. Residues 875–893 (FLIIGYSTIYTMFPVFSLV) form a helical membrane-spanning segment. Residues 894-923 (LDKDVKSEVAMLYPELYKDLLKGRPLSYKT) lie on the Cytoplasmic side of the membrane. The chain crosses the membrane as a helical span at residues 924–942 (FLIWVLISIYQGSTIMYGA). The Extracellular portion of the chain corresponds to 943 to 949 (LLLFESE). The helical transmembrane segment at 950–972 (FVHIVAISFTSLILTELLMVALT) threads the bilayer. Topologically, residues 973-978 (IQTWHW) are cytoplasmic. The chain crosses the membrane as a helical span at residues 979–999 (LMTVAELLSLACYIASLVFLH). The Extracellular portion of the chain corresponds to 1000–1006 (EFIDVYF). A helical transmembrane segment spans residues 1007 to 1030 (IATLSFLWKVSVITLVSCLPLYVL). At 1031 to 1047 (KYLRRRFSPPSYSKLTS) the chain is on the cytoplasmic side.

Belongs to the cation transport ATPase (P-type) (TC 3.A.3) family. Type IV subfamily. Heterotrimer with MON2 and DOP1B; this complex regulates SNX3-retromer mediated endosomal sorting of WLS. Interacts with RAB5A and RAB11A. Mg(2+) serves as cofactor.

The protein resides in the early endosome membrane. Its subcellular location is the recycling endosome membrane. It localises to the late endosome membrane. The protein localises to the golgi apparatus. It is found in the trans-Golgi network membrane. The protein resides in the cell membrane. The enzyme catalyses ATP + H2O + phospholipidSide 1 = ADP + phosphate + phospholipidSide 2.. Plays a role in regulating membrane trafficking of cargo proteins, namely endosome to plasma membrane recycling, probably acting through RAB5 and RAB11 activation. Also involved in endosome to trans-Golgi network retrograde transport. In complex with MON2 and DOP1B, regulates SNX3 retromer-mediated endosomal sorting of WLS, a transporter of Wnt morphogens in developing tissues. Participates in the formation of endosomal carriers that direct WLS trafficking back to Golgi, away from lysosomal degradation. Appears to be implicated in intercellular communication by negatively regulating the release of exosomes. The flippase activity towards membrane lipids and its role in membrane asymmetry remains to be proved. Required for the maintenance of neurite morphology and synaptic transmission. The polypeptide is Probable phospholipid-transporting ATPase IIA (Homo sapiens (Human)).